The following is a 305-amino-acid chain: Carbonic anhydrase 5A, mitochondrial (305 aa).

Residues 1-38 (MLGRNTWKTSAFSFLVEQMWAPLWSRSMRPGRWCSQRS) constitute a mitochondrion transit peptide. The region spanning 39–296 (CAWQTSNNTL…LMNRKVWASF (258 aa)) is the Alpha-carbonic anhydrase domain. H130, H132, and H155 together coordinate Zn(2+).

Belongs to the alpha-carbonic anhydrase family. Requires Zn(2+) as cofactor.

Its subcellular location is the mitochondrion. The enzyme catalyses hydrogencarbonate + H(+) = CO2 + H2O. Its activity is regulated as follows. Activated by L- and D-histidine. Activated by L- and D-phenylalanine. Activated by L-adrenaline. Inhibited by coumarins, sulfonamide derivatives such as acetazolamide and Foscarnet (phosphonoformate trisodium salt). Activated by histamine. Mitochondrial carbonic anhydrase that catalyzes the reversible conversion of carbon dioxide to bicarbonate/HCO3. Mitochondria are impermeable to HCO3, and thus this intramitochondrial carbonic anhydrase is pivotal in providing HCO3 for multiple mitochondrial enzymes that catalyze the formation of essential metabolites of intermediary metabolism in the urea and Krebs cycles. This Homo sapiens (Human) protein is Carbonic anhydrase 5A, mitochondrial.